The sequence spans 818 residues: Piwi-like protein (818 aa).

The PAZ domain maps to 220–339 (RINRVLNDNS…ITGELCFLCG (120 aa)). A Piwi domain is found at 501-800 (KIALVFVPDD…LAELIGKVHK (300 aa)).

The protein belongs to the argonaute family. Piwi subfamily.

The chain is Piwi-like protein (iwi) from Dugesia japonica (Planarian).